The primary structure comprises 346 residues: DNA-directed RNA polymerases I and III subunit RPAC1 (346 aa).

N-acetylalanine is present on A2.

It belongs to the archaeal Rpo3/eukaryotic RPB3 RNA polymerase subunit family. As to quaternary structure, component of the RNA polymerase I and RNA polymerase III complexes consisting of at least 13 and 17 subunits, respectively. Pol I complex consists of a ten-subunit catalytic core composed of POLR1A/RPA1, POLR1B/RPA2, POLR1C/RPAC1, POLR1D/RPAC2, POLR1H/RPA12, POLR2E/RPABC1, POLR2F/RPABC2, POLR2H/RPABC3, POLR2K/RPABC4 and POLR2L/RPABC5; a mobile stalk subunit POLR1F/RPA43 protruding from the core and additional subunits homologous to general transcription factors POLR1E/RPA49 and POLR1G/RPA34. Part of Pol I pre-initiation complex (PIC), in which Pol I core assembles with RRN3 and promoter-bound UTBF and SL1/TIF-IB complex. Pol III complex consists of a ten-subunit catalytic core composed of POLR3A/RPC1, POLR3B/RPC2, POLR1C/RPAC1, POLR1D/RPAC2, POLR3K/RPC10, POLR2E/RPABC1, POLR2F/RPABC2, POLR2H/RPABC3, POLR2K/RPABC4 and POLR2L/RPABC5; a mobile stalk composed of two subunits POLR3H/RPC8 and CRCP/RPC9, protruding from the core and functioning primarily in transcription initiation; and additional subunits homologous to general transcription factors of the RNA polymerase II machinery, POLR3C/RPC3-POLR3F/RPC6-POLR3G/RPC7 heterotrimer required for transcription initiation and POLR3D/RPC4-POLR3E/RPC5 heterodimer involved in both transcription initiation and termination.

The protein resides in the nucleus. Its subcellular location is the cytoplasm. It localises to the cytosol. Its function is as follows. DNA-dependent RNA polymerase catalyzes the transcription of DNA into RNA using the four ribonucleoside triphosphates as substrates. Common component of RNA polymerases I and III which synthesize ribosomal RNA precursors and short non-coding RNAs including 5S rRNA, snRNAs, tRNAs and miRNAs, respectively. POLR1C/RPAC1 is part of the polymerase core and may function as a clamp element that moves to open and close the cleft. The sequence is that of DNA-directed RNA polymerases I and III subunit RPAC1 (POLR1C) from Bos taurus (Bovine).